The primary structure comprises 148 residues: UPF0260 protein PC1_1943 (148 aa).

It belongs to the UPF0260 family.

The sequence is that of UPF0260 protein PC1_1943 from Pectobacterium carotovorum subsp. carotovorum (strain PC1).